The primary structure comprises 407 residues: Putative ammonium transporter MTH_661 (407 aa).

The next 12 membrane-spanning stretches (helical) occupy residues 9–29 (AWMLISTALVILMTVPGVAMF), 47–67 (FVSLGIVSLLWFLFGYGLIFG), 70–90 (VSGIIGSHQVGISLINLGSAS), 101–121 (FAIFQMTFAAITVALISGAVV), 129–149 (WILFIPLWFALVYVPVAHWVW), 162–182 (FAGGIVVHITSGIAALALALV), 196–216 (LGYSVIGTGLLWFGWFGFNAG), 226–246 (ANAMIVTNTSAAAGMIGWILM), 257–277 (LGALSGAVAGLASITPAAGFV), 279–299 (IGASIVTGLVAAVICYLAVSW), 312–332 (VFGIHGVSGIIGTLGVGLFAV), and 357–377 (IGVVTVTVYTFVVTYILAMLL).

Belongs to the ammonia transporter channel (TC 1.A.11.2) family.

It localises to the cell membrane. The chain is Putative ammonium transporter MTH_661 from Methanothermobacter thermautotrophicus (strain ATCC 29096 / DSM 1053 / JCM 10044 / NBRC 100330 / Delta H) (Methanobacterium thermoautotrophicum).